A 232-amino-acid polypeptide reads, in one-letter code: GFP-like fluorescent chromoprotein dsFP483 (232 aa).

The segment at residues 66-68 is a cross-link (2-iminomethyl-5-imidazolinone (Gln-Gly)); sequence QYG. Tyr67 carries the 2,3-didehydrotyrosine modification.

This sequence belongs to the GFP family. In terms of processing, contains a chromophore consisting of modified amino acid residues. The chromophore is formed by autocatalytic backbone condensation between Xaa-N and Gly-(N+2), oxidation of Tyr-(N+1) to didehydrotyrosine, and formation of a double bond to the alpha-amino nitrogen of residue Xaa-N. Maturation of the chromophore requires nothing other than molecular oxygen. The precise stereochemistry of the tyrosine has not been determined. In terms of tissue distribution, oral disk.

In terms of biological role, pigment protein that is green in color. In Discosoma striata (Striped mushroom), this protein is GFP-like fluorescent chromoprotein dsFP483.